A 393-amino-acid polypeptide reads, in one-letter code: Protein DDI1 homolog 2 (393 aa).

One can recognise a Ubiquitin-like domain in the interval 1–81; that stretch reads MLITVYCVRR…VILRQKEAPE (81 aa). Positions 82 to 127 are disordered; sequence TRPAAPFPGLDFSTIAVPGASSQPDPSQPQAPPPPPDTSSFPQGLD. A compositionally biased stretch (pro residues) spans 107–118; the sequence is PSQPQAPPPPPD. The active site involves D246. A Ubiquitin-binding motif is present at residues 370–389; that stretch reads EEIADRELAEVLQKSADEAD.

The protein belongs to the DDI1 family. In terms of assembly, homodimer.

It localises to the cytoplasm. Its subcellular location is the cytosol. It is found in the chromosome. In terms of biological role, aspartic protease that mediates the cleavage of NFE2L1/NRF1 at 'Leu-104', thereby promoting release of NFE2L1/NRF1 from the endoplasmic reticulum membrane. Ubiquitination of NFE2L1/NRF1 is a prerequisite for cleavage, suggesting that DDI2 specifically recognizes and binds ubiquitinated NFE2L1/NRF1. Seems to act as a proteasomal shuttle which links the proteasome and replication fork proteins like RTF2. Required for cellular survival following replication stress. This is Protein DDI1 homolog 2 (ddi2) from Xenopus laevis (African clawed frog).